Here is a 199-residue protein sequence, read N- to C-terminus: Imidazole glycerol phosphate synthase subunit HisH 2 (199 aa).

The 199-residue stretch at 1–199 folds into the Glutamine amidotransferase type-1 domain; sequence MIAVIDVSGN…NNFLSLESTC (199 aa). The active-site Nucleophile is the Cys76. Catalysis depends on residues His177 and Glu179.

Heterodimer of HisH and HisF.

It localises to the cytoplasm. The catalysed reaction is 5-[(5-phospho-1-deoxy-D-ribulos-1-ylimino)methylamino]-1-(5-phospho-beta-D-ribosyl)imidazole-4-carboxamide + L-glutamine = D-erythro-1-(imidazol-4-yl)glycerol 3-phosphate + 5-amino-1-(5-phospho-beta-D-ribosyl)imidazole-4-carboxamide + L-glutamate + H(+). The enzyme catalyses L-glutamine + H2O = L-glutamate + NH4(+). It functions in the pathway amino-acid biosynthesis; L-histidine biosynthesis; L-histidine from 5-phospho-alpha-D-ribose 1-diphosphate: step 5/9. In terms of biological role, IGPS catalyzes the conversion of PRFAR and glutamine to IGP, AICAR and glutamate. The HisH subunit provides the glutamine amidotransferase activity that produces the ammonia necessary to HisF for the synthesis of IGP and AICAR. The protein is Imidazole glycerol phosphate synthase subunit HisH 2 of Legionella pneumophila subsp. pneumophila (strain Philadelphia 1 / ATCC 33152 / DSM 7513).